A 220-amino-acid polypeptide reads, in one-letter code: Glutamine amidotransferase-like class 1 domain-containing protein 1 (220 aa).

The first 38 residues, 1-38 (MASERLPNRPACLLVASGAAEGVSAQSFLHCFTMASTA), serve as a signal peptide directing secretion. Asn-201 carries N-linked (GlcNAc...) asparagine glycosylation.

Belongs to the peptidase C56 family. In terms of assembly, homotetramer. Component of the FERRY complex composed of five subunits, TBCK, PPP1R21, FERRY3, CRYZL1 and GATD1 with a ratio of 1:2:1:2:4, respectively.

It localises to the secreted. Its subcellular location is the early endosome. Its function is as follows. Component of the FERRY complex (Five-subunit Endosomal Rab5 and RNA/ribosome intermediary). The FERRY complex directly interacts with mRNAs and RAB5A, and functions as a RAB5A effector involved in the localization and the distribution of specific mRNAs most likely by mediating their endosomal transport. The complex recruits mRNAs and ribosomes to early endosomes through direct mRNA-interaction. This chain is Glutamine amidotransferase-like class 1 domain-containing protein 1, found in Homo sapiens (Human).